The chain runs to 662 residues: Calcium-dependent protease (662 aa).

Residues 196 to 529 (QWHLKQTTIG…YGRINALKAV (334 aa)) enclose the Peptidase S8 domain. Active-site charge relay system residues include Asp-233, His-270, and Ser-466. The region spanning 535–662 (AQPEPVSIFT…IRSLTIELGF (128 aa)) is the P/Homo B domain.

Belongs to the peptidase S8 family.

It localises to the cytoplasm. In terms of biological role, degrades phycobiliproteins in vitro. Has a substrate specificity similar to that of trypsin. The sequence is that of Calcium-dependent protease (prcA) from Trichormus variabilis (strain ATCC 29413 / PCC 7937) (Anabaena variabilis).